Reading from the N-terminus, the 74-residue chain is Conotoxin VnMEKL-0221 (74 aa).

Residues 1–19 form the signal peptide; the sequence is MEKLTILLLVAAVLMWTQA. The propeptide occupies 20–46; that stretch reads LIQEKRPKEKIKFLSKRKTTAESWWEG. 3 cysteine pairs are disulfide-bonded: cysteine 48–cysteine 62, cysteine 55–cysteine 66, and cysteine 61–cysteine 71.

Belongs to the conotoxin O2 superfamily. As to expression, expressed by the venom duct.

It localises to the secreted. The polypeptide is Conotoxin VnMEKL-0221 (Conus ventricosus (Mediterranean cone)).